The following is a 762-amino-acid chain: Phosphoribosylformylglycinamidine synthase subunit PurL (762 aa).

Residue His58 is part of the active site. 2 residues coordinate ATP: Tyr61 and Arg105. Glu107 provides a ligand contact to Mg(2+). Substrate-binding positions include 108–111 (SHNH) and Arg130. His109 serves as the catalytic Proton acceptor. Position 131 (Asp131) interacts with Mg(2+). Substrate is bound at residue Gln255. Mg(2+) is bound at residue Asp283. 327-329 (ESQ) lines the substrate pocket. 2 residues coordinate ATP: Asn513 and Gly550. Asn551 is a binding site for Mg(2+). Ser553 is a binding site for substrate.

This sequence belongs to the FGAMS family. As to quaternary structure, monomer. Part of the FGAM synthase complex composed of 1 PurL, 1 PurQ and 2 PurS subunits.

The protein localises to the cytoplasm. The catalysed reaction is N(2)-formyl-N(1)-(5-phospho-beta-D-ribosyl)glycinamide + L-glutamine + ATP + H2O = 2-formamido-N(1)-(5-O-phospho-beta-D-ribosyl)acetamidine + L-glutamate + ADP + phosphate + H(+). It participates in purine metabolism; IMP biosynthesis via de novo pathway; 5-amino-1-(5-phospho-D-ribosyl)imidazole from N(2)-formyl-N(1)-(5-phospho-D-ribosyl)glycinamide: step 1/2. Part of the phosphoribosylformylglycinamidine synthase complex involved in the purines biosynthetic pathway. Catalyzes the ATP-dependent conversion of formylglycinamide ribonucleotide (FGAR) and glutamine to yield formylglycinamidine ribonucleotide (FGAM) and glutamate. The FGAM synthase complex is composed of three subunits. PurQ produces an ammonia molecule by converting glutamine to glutamate. PurL transfers the ammonia molecule to FGAR to form FGAM in an ATP-dependent manner. PurS interacts with PurQ and PurL and is thought to assist in the transfer of the ammonia molecule from PurQ to PurL. In Corynebacterium glutamicum (strain ATCC 13032 / DSM 20300 / JCM 1318 / BCRC 11384 / CCUG 27702 / LMG 3730 / NBRC 12168 / NCIMB 10025 / NRRL B-2784 / 534), this protein is Phosphoribosylformylglycinamidine synthase subunit PurL.